Here is a 281-residue protein sequence, read N- to C-terminus: Ribosomal RNA small subunit methyltransferase A (281 aa).

Residues Asn-36, Leu-38, Gly-63, Glu-84, Asp-109, and Asn-127 each contribute to the S-adenosyl-L-methionine site.

It belongs to the class I-like SAM-binding methyltransferase superfamily. rRNA adenine N(6)-methyltransferase family. RsmA subfamily.

Its subcellular location is the cytoplasm. The catalysed reaction is adenosine(1518)/adenosine(1519) in 16S rRNA + 4 S-adenosyl-L-methionine = N(6)-dimethyladenosine(1518)/N(6)-dimethyladenosine(1519) in 16S rRNA + 4 S-adenosyl-L-homocysteine + 4 H(+). Functionally, specifically dimethylates two adjacent adenosines (A1518 and A1519) in the loop of a conserved hairpin near the 3'-end of 16S rRNA in the 30S particle. May play a critical role in biogenesis of 30S subunits. The polypeptide is Ribosomal RNA small subunit methyltransferase A (Borreliella burgdorferi (strain ATCC 35210 / DSM 4680 / CIP 102532 / B31) (Borrelia burgdorferi)).